We begin with the raw amino-acid sequence, 333 residues long: MRRVTLTQFLIEQQRAGRVSADLRLLIEVVARAVKAISVNVSKGALAGVLGEAGTDNVQGEAQKKLDVIANEILLQANEWGGHLAAMASEEVETVHQIPFDYPKGGYLLLFDPLDGSSNIDVNISVGTIFSVLRFPEGEAEPTEQSFMQPGREQVAAGYAVYGPSTQLVLTVGHGVHAFTLDREMGSFIYTHPFMTIPDDTHEFAINASNARFWEEPVQRYVGELQAGKTGPRGKDFNMRWVASMVADVHRILTRGGIFMYPLDEKCRAQGGKLRLMYEANPMAMLVEQAGGAATTGRERILDLMPTKLHQRVPVILGSRNEVERVTAYHRES.

Residues E90, D112, L114, and D115 each contribute to the Mg(2+) site. Substrate-binding positions include 115–118, N207, and K273; that span reads DGSS. Residue E279 coordinates Mg(2+).

The protein belongs to the FBPase class 1 family. Homotetramer. Mg(2+) serves as cofactor.

The protein localises to the cytoplasm. It catalyses the reaction beta-D-fructose 1,6-bisphosphate + H2O = beta-D-fructose 6-phosphate + phosphate. Its pathway is carbohydrate biosynthesis; gluconeogenesis. The sequence is that of Fructose-1,6-bisphosphatase class 1 from Azoarcus sp. (strain BH72).